A 159-amino-acid chain; its full sequence is NADH-quinone oxidoreductase subunit I (159 aa).

2 consecutive 4Fe-4S ferredoxin-type domains span residues Arg-51–Asp-80 and Thr-90–Asn-119. [4Fe-4S] cluster is bound by residues Cys-60, Cys-63, Cys-66, Cys-70, Cys-99, Cys-102, Cys-105, and Cys-109.

Belongs to the complex I 23 kDa subunit family. NDH-1 is composed of 14 different subunits. Subunits NuoA, H, J, K, L, M, N constitute the membrane sector of the complex. The cofactor is [4Fe-4S] cluster.

The protein localises to the cell inner membrane. The catalysed reaction is a quinone + NADH + 5 H(+)(in) = a quinol + NAD(+) + 4 H(+)(out). Functionally, NDH-1 shuttles electrons from NADH, via FMN and iron-sulfur (Fe-S) centers, to quinones in the respiratory chain. The immediate electron acceptor for the enzyme in this species is believed to be ubiquinone. Couples the redox reaction to proton translocation (for every two electrons transferred, four hydrogen ions are translocated across the cytoplasmic membrane), and thus conserves the redox energy in a proton gradient. In Rickettsia bellii (strain OSU 85-389), this protein is NADH-quinone oxidoreductase subunit I.